The sequence spans 726 residues: Long-chain-alcohol oxidase FAO4A (726 aa).

Residues 103-119 (ILLNWSSSYFSLLRMLF) form a helical membrane-spanning segment. 224-239 (CDAVVVGSGSGGGVAA) serves as a coordination point for FAD. Residue H659 is the Proton acceptor of the active site.

It belongs to the GMC oxidoreductase family.

Its subcellular location is the membrane. It carries out the reaction a long-chain primary fatty alcohol + O2 = a long-chain fatty aldehyde + H2O2. Long-chain fatty alcohol oxidase involved in the omega-oxidation pathway of lipid degradation. The protein is Long-chain-alcohol oxidase FAO4A (FAO4A) of Arabidopsis thaliana (Mouse-ear cress).